Consider the following 323-residue polypeptide: tRNA N6-adenosine threonylcarbamoyltransferase (323 aa).

Fe cation contacts are provided by histidine 106, histidine 110, and tyrosine 127. Residues 127-131 (YVSGA), aspartate 159, glycine 172, glutamate 176, and asparagine 255 each bind substrate. Aspartate 283 is a Fe cation binding site.

Belongs to the KAE1 / TsaD family. As to quaternary structure, monomer. Component of the KEOPS complex that consists of Kae1, Bud32, Cgi121 and Pcc1; the whole complex dimerizes. The cofactor is Fe(2+).

Its subcellular location is the cytoplasm. The enzyme catalyses L-threonylcarbamoyladenylate + adenosine(37) in tRNA = N(6)-L-threonylcarbamoyladenosine(37) in tRNA + AMP + H(+). In terms of biological role, required for the formation of a threonylcarbamoyl group on adenosine at position 37 (t(6)A37) in tRNAs that read codons beginning with adenine. Is a component of the KEOPS complex that is probably involved in the transfer of the threonylcarbamoyl moiety of threonylcarbamoyl-AMP (TC-AMP) to the N6 group of A37. Kae1 likely plays a direct catalytic role in this reaction, but requires other protein(s) of the complex to fulfill this activity. The protein is tRNA N6-adenosine threonylcarbamoyltransferase of Methanocella arvoryzae (strain DSM 22066 / NBRC 105507 / MRE50).